We begin with the raw amino-acid sequence, 612 residues long: Elongation factor 4 (612 aa).

One can recognise a tr-type G domain in the interval 11 to 193 (KHIRNFAIVA…KVVKDIPAPS (183 aa)). GTP is bound by residues 23–28 (DHGKST) and 140–143 (NKID).

It belongs to the TRAFAC class translation factor GTPase superfamily. Classic translation factor GTPase family. LepA subfamily.

Its subcellular location is the cell membrane. The enzyme catalyses GTP + H2O = GDP + phosphate + H(+). Functionally, required for accurate and efficient protein synthesis under certain stress conditions. May act as a fidelity factor of the translation reaction, by catalyzing a one-codon backward translocation of tRNAs on improperly translocated ribosomes. Back-translocation proceeds from a post-translocation (POST) complex to a pre-translocation (PRE) complex, thus giving elongation factor G a second chance to translocate the tRNAs correctly. Binds to ribosomes in a GTP-dependent manner. The sequence is that of Elongation factor 4 from Lactobacillus helveticus (strain DPC 4571).